Consider the following 967-residue polypeptide: Disks large homolog 1 (967 aa).

Positions 5–65 (SSEKAHKAIE…LYEQTLLSER (61 aa)) constitute an L27 domain. In terms of domain architecture, PDZ 1 spans 202–289 (NIVLEKGHTG…VVSLSLKRRK (88 aa)). The segment at 324-351 (IHSPSAPIHPPPPPPVHHGSLSQLSVGQ) is disordered. Residues 330–339 (PIHPPPPPPV) are compositionally biased toward pro residues. PDZ domains follow at residues 361–448 (VIDL…QQGT) and 510–591 (PVQL…QYRP). Positions 619 to 690 (RKSEYVRALF…PSKKRVEKRE (72 aa)) constitute an SH3 domain. A disordered region spans residues 673–723 (EETAEGVIPSKKRVEKRERLRRKQVNFNSGSQSLGRNSSTTGLENRRGSRS). The segment covering 682-696 (SKKRVEKRERLRRKQ) has biased composition (basic residues). Over residues 697–715 (VNFNSGSQSLGRNSSTTGL) the composition is skewed to polar residues. Residues 769-955 (VRPVIILGAL…VLSKVYSIIS (187 aa)) form the Guanylate kinase-like domain.

Belongs to the MAGUK family. Homooligomerizes; requires L27 domain. Interacts (via L27 domain) with ajm-1; the interaction regulates ajm-1 apical junction location. Expressed in the apical junctions in the hypodermis. Expressed in epithelial cells in the reproductive system including vulva, uterus and spermatheca.

Its subcellular location is the membrane. It localises to the apical cell membrane. The protein localises to the cell junction. It is found in the adherens junction. The protein resides in the lateral cell membrane. Its subcellular location is the cytoplasm. Functionally, essential multidomain scaffolding protein required for normal development. Recruits channels, receptors and signaling molecules to discrete plasma membrane domains in polarized cells. Required for proper embryonic elongation. Acts upstream of ajm-1 and becomes localized to apical junctions independently of ajm-1. With let-413, cooperatively regulates ajm-1 localization to apical junctions and the establishment of newly formed epithelia. Plays a role in assembling the adherens junction by clustering ajm-1 and other proteins, to form electron-dense structures; may form a compartment distinct to that of hmp-1 and associated proteins. Plays a role in the directed outgrowth of seam cells, towards neighboring seam cells, during larval development. This chain is Disks large homolog 1, found in Caenorhabditis elegans.